A 167-amino-acid chain; its full sequence is Putative lipoprotein YteS (167 aa).

The first 20 residues, 1–20 (MTKRIRTALCVIVSVLFLAS), serve as a signal peptide directing secretion. Residue cysteine 21 is the site of N-palmitoyl cysteine attachment. The S-diacylglycerol cysteine moiety is linked to residue cysteine 21.

The protein resides in the cell membrane. Functionally, may play a role in the degradation of type I rhamnogalacturonan derived from plant cell walls. This is Putative lipoprotein YteS (yteS) from Bacillus subtilis (strain 168).